The sequence spans 447 residues: Trichothecene C-3 esterase (447 aa).

A signal peptide spans 1 to 22 (MALNRLVFSLSLWLGFIGAAQA). N-linked (GlcNAc...) asparagine glycosylation is found at N59, N66, N136, and N189. The Charge relay system role is filled by S202. 3 N-linked (GlcNAc...) asparagine glycosylation sites follow: N238, N284, and N314. Catalysis depends on charge relay system residues D352 and H384. N-linked (GlcNAc...) asparagine glycans are attached at residues N389 and N423.

The protein belongs to the AB hydrolase superfamily. Lipase family.

The protein operates within sesquiterpene biosynthesis; trichothecene biosynthesis. Its function is as follows. Trichothecene C-3 esterase; part of the core gene cluster that mediates the biosynthesis of trichothecenes, a very large family of chemically related bicyclic sesquiterpene compounds acting as mycotoxins, including T2-toxin. The biosynthesis of trichothecenes begins with the cyclization of farnesyl diphosphate to trichodiene and is catalyzed by the trichodiene synthase TRI5. Trichodiene undergoes a series of oxygenations catalyzed by the cytochrome P450 monooxygenase TRI4. TRI4 controls the addition of four oxygens at C-2, C-3, C-11, and the C-12, C-13-epoxide to form the intermediate isotrichotriol. Isotrichotriol then undergoes a non-enzymatic isomerization and cyclization to form isotrichodermol. During this process, the oxygen at the C-2 position becomes the pyran ring oxygen and the hydroxyl group at C-11 is lost. More complex type A trichothecenes are built by modifying isotrichodermol through a series of paired hydroxylation and acetylation or acylation steps. Isotrichodermol is converted to isotrichodermin by the acetyltransferase TRI101. TRI101 encodes a C-3 transacetylase that acts as a self-protection or resistance factor during biosynthesis and that the presence of a free C-3 hydroxyl group is a key component of Fusarium trichothecene phytotoxicity. A second hydroxyl group is added to C-15 by the trichothecene C-15 hydroxylase TRI11, producing 15-decalonectrin, which is then acetylated by TRI3, producing calonectrin. A third hydroxyl group is added at C-4 by the cytochrome P450 monooxygenase TRI13, converting calonectrin to 3,15-diacetoxyspirpenol, which is subsequently acetylated by the acetyltransferase TRI7. A fourth hydroxyl group is added to C-8 by the cytochrome P450 monooxygenase TRI1, followed by the addition of an isovaleryl moiety by TRI16. Finally, the acetyl group is removed from the C-3 position by the trichothecene C-3 esterase TRI8 to produce T-2 toxin. The sequence is that of Trichothecene C-3 esterase from Fusarium sporotrichioides.